The following is a 317-amino-acid chain: Protoheme IX farnesyltransferase (317 aa).

Transmembrane regions (helical) follow at residues 36–56 (VMVLVIFTALVGMVVSDATVN), 57–77 (PVIAAISLLMIAVGAGASGCL), 108–128 (LAFGIVLSVGSVLILGLASNW), 129–149 (LAAGLLAFTIVFYAVIYSMWL), 157–177 (IVIGGAAGALPPVVGQAAVTG), 184–204 (LVLFAIIFIWTPPHFWALALV), 230–247 (IIWYSLVLAPLALLPVWL), 251–273 (GWLYAVVGVLGGLGMLAGAVQVY), and 284–304 (AAMGLFAFSILYLFLLFSALL).

It belongs to the UbiA prenyltransferase family. Protoheme IX farnesyltransferase subfamily.

The protein resides in the cell inner membrane. It carries out the reaction heme b + (2E,6E)-farnesyl diphosphate + H2O = Fe(II)-heme o + diphosphate. It participates in porphyrin-containing compound metabolism; heme O biosynthesis; heme O from protoheme: step 1/1. Its function is as follows. Converts heme B (protoheme IX) to heme O by substitution of the vinyl group on carbon 2 of heme B porphyrin ring with a hydroxyethyl farnesyl side group. The polypeptide is Protoheme IX farnesyltransferase (Methylorubrum extorquens (strain CM4 / NCIMB 13688) (Methylobacterium extorquens)).